Here is a 404-residue protein sequence, read N- to C-terminus: Pleckstrin homology domain-containing family A member 1 (404 aa).

PH domains are found at residues 7–112 and 191–289; these read QNRI…KAIK and AVIK…GAIV. Disordered regions lie at residues 291–332 and 355–404; these read QRGP…RSNS and NFKV…VSDV. The span at 316–332 shows a compositional bias: low complexity; sequence TNAATATSHSTASRSNS. Phosphoserine occurs at positions 332 and 362.

Interacts with MPDZ and PTPN13. As to expression, highly expressed in skeletal muscle, thymus, pancreas, placenta and lung. Detected at low levels in brain, heart, peripheral blood leukocytes, testis, ovary, spinal cord, thyroid, kidney, liver, small intestine and colon.

It is found in the cytoplasm. The protein resides in the cell membrane. The protein localises to the nucleus. Functionally, binds specifically to phosphatidylinositol 3,4-diphosphate (PtdIns3,4P2), but not to other phosphoinositides. May recruit other proteins to the plasma membrane. This Homo sapiens (Human) protein is Pleckstrin homology domain-containing family A member 1 (PLEKHA1).